The chain runs to 601 residues: DNA ligase (601 aa).

Residue Asp-258 participates in ATP binding. Lys-260 functions as the N6-AMP-lysine intermediate in the catalytic mechanism. The ATP site is built by Arg-265, Arg-280, Glu-310, Phe-350, Arg-427, and Lys-433. The segment at Asp-568 to Val-601 is disordered.

It belongs to the ATP-dependent DNA ligase family. The cofactor is Mg(2+).

The enzyme catalyses ATP + (deoxyribonucleotide)n-3'-hydroxyl + 5'-phospho-(deoxyribonucleotide)m = (deoxyribonucleotide)n+m + AMP + diphosphate.. Functionally, DNA ligase that seals nicks in double-stranded DNA during DNA replication, DNA recombination and DNA repair. In Saccharolobus islandicus (strain Y.G.57.14 / Yellowstone #1) (Sulfolobus islandicus), this protein is DNA ligase.